The following is a 503-amino-acid chain: MRINPGEITKVLEEKIKSFEEKIDLEDTGKVIQVGDGIARAYGLNKVMVSELVEFVETGVKGVAFNLEEDNVGIIILGEYKDIKEGHTVRRLKRIIEVPVGEELLGRVVNPLGEPLDGKGPINAKNFRPIEIKAPGVIYRKPVDTPLQTGIKAIDSMIPIGRGQRELIIGDRQTGKTAIAIDTIINQKGQGVYCIYVAIGQKKSAIARIIDKLRQYGAMEYTTVVVASASDPASLQYIAPYAGCAMGEYFAYSGRDALVVYDDLSKHAVAYRQLSLLMRRPPGREAYPGDIFYLHSRLLERAVRLNDKLGGGSLTALPIVETQANDISAYIPTNVISITDGQIYLEPGLFYAGQRPAINVGLSVSRVGGSAQIKAMKQVAGMLRIDLAQYRELETFAQFATELDPATRAQIIRGQRLMELLKQEQYSPMPVEEQVVVLFAGVRGYLDDLPVEEVRRFEKEFLRFMHEKHQDILDDIKTKKELTSETEEKLKKAIEEFKTTFRV.

Position 170 to 177 (170 to 177 (GDRQTGKT)) interacts with ATP.

This sequence belongs to the ATPase alpha/beta chains family. As to quaternary structure, F-type ATPases have 2 components, CF(1) - the catalytic core - and CF(0) - the membrane proton channel. CF(1) has five subunits: alpha(3), beta(3), gamma(1), delta(1), epsilon(1). CF(0) has three main subunits: a(1), b(2) and c(9-12). The alpha and beta chains form an alternating ring which encloses part of the gamma chain. CF(1) is attached to CF(0) by a central stalk formed by the gamma and epsilon chains, while a peripheral stalk is formed by the delta and b chains.

It is found in the cell inner membrane. The catalysed reaction is ATP + H2O + 4 H(+)(in) = ADP + phosphate + 5 H(+)(out). In terms of biological role, produces ATP from ADP in the presence of a proton gradient across the membrane. The alpha chain is a regulatory subunit. This Thermotoga maritima (strain ATCC 43589 / DSM 3109 / JCM 10099 / NBRC 100826 / MSB8) protein is ATP synthase subunit alpha.